Reading from the N-terminus, the 713-residue chain is Cadherin-13 (713 aa).

An N-terminal signal peptide occupies residues Met1–Ala22. Positions Glu23–Arg138 are excised as a propeptide. N-linked (GlcNAc...) asparagine glycosylation is found at Asn52 and Asn86. Cadherin domains are found at residues Ser139–Phe245, Arg246–Phe363, Thr364–Phe477, Tyr478–Ile585, and Phe584–Ala694. Residues Pro156 to Lys178 form a disordered region. The segment covering Asp158–Lys172 has biased composition (basic and acidic residues). Asn382, Asn489, Asn500, Asn530, Asn598, Asn638, and Asn671 each carry an N-linked (GlcNAc...) asparagine glycan. A lipid anchor (GPI-anchor amidated glycine) is attached at Gly693. A propeptide spans Ala694–Leu713 (removed in mature form).

By contrast to classical cadherins, homodimerization in trans is not mediated by cadherin EC1 domain strand-swapping, but instead through a homophilic adhesive interface which joins two elongated EC1-EC2 domains through a region near their Ca2+-binding sites to form a tetrahedral, X-like shape.

The protein localises to the cell membrane. The protein resides in the cytoplasm. Cadherins are calcium-dependent cell adhesion proteins. They preferentially interact with themselves in a homophilic manner in connecting cells; cadherins may thus contribute to the sorting of heterogeneous cell types. May act as a negative regulator of neural cell growth. In Bos taurus (Bovine), this protein is Cadherin-13 (CDH13).